The chain runs to 470 residues: Monocarboxylate transporter 4 (470 aa).

The Cytoplasmic portion of the chain corresponds to 1-17 (MGGAVVDEGPTGIKAPD). Residues 18–38 (GGWGWAVLFGCFIITGFSYAF) traverse the membrane as a helical segment. The Extracellular portion of the chain corresponds to 39-61 (PKAVSVFFKELMHEFGIGYSDTA). The chain crosses the membrane as a helical span at residues 62–82 (WISSILLAMLYGTGPLCSVCV). The Cytoplasmic portion of the chain corresponds to 83–84 (NR). A helical membrane pass occupies residues 85-105 (FGCRPVMLVGGLFASLGMVAA). Residues 106–109 (SFCR) are Extracellular-facing. A helical transmembrane segment spans residues 110–130 (SIIQIYLTTGVITGLGLALNF). The Cytoplasmic portion of the chain corresponds to 131–149 (QPSLIMLNRYFNKRRPIAN). Residues 150-170 (GLAAAGSPVFLCALSPLGQLL) traverse the membrane as a helical segment. The Extracellular segment spans residues 171 to 179 (QDHYGWRGG). The chain crosses the membrane as a helical span at residues 180–200 (FLILGGLLLNCCVCAALMRPL). Residues 201-231 (VAPQVGGGTEPRGPQRPPQRLLDLSVFRDRG) lie on the Cytoplasmic side of the membrane. Residues 232–252 (FLIYAVAASIMVLGLFVPPVF) traverse the membrane as a helical segment. The Extracellular segment spans residues 253 to 267 (VVSYAKDMGVPDTKA). A helical transmembrane segment spans residues 268-288 (AFLLTILGFIDIFARPTAGFI). Residues 289–298 (TGLKKVRPYS) are Cytoplasmic-facing. Residues 299 to 319 (VYLFSFAMFFNGFTDLTGSTA) traverse the membrane as a helical segment. Topologically, residues 320–321 (TD) are extracellular. Residues 322 to 342 (YGGLVVFCIFFGISYGMVGAL) form a helical membrane-spanning segment. The Cytoplasmic segment spans residues 343–355 (QFEVLMAIVGTQK). Residues 356–376 (FSSAIGLVLLLEAVAVLIGPP) form a helical membrane-spanning segment. At 377–391 (SGGKLLDATKVYKYV) the chain is on the extracellular side. Residues 392–412 (FILAGAEVLTSSLVLLLGNFF) traverse the membrane as a helical segment. Over 413-470 (CIGKRKRPEVTEPEEVASEEKLHKPPVDVGVDSREVEHFLKAEPEKNGEVVHTPETSV) the chain is Cytoplasmic. Basolateral sorting signal regions lie at residues 429–446 (ASEE…VDSR) and 446–470 (REVE…ETSV). At S430 the chain carries Phosphoserine. T465 bears the Phosphothreonine mark. A Phosphoserine modification is found at S469.

The protein belongs to the major facilitator superfamily. Monocarboxylate porter (TC 2.A.1.13) family. Interacts with BSG; interaction mediates SLC16A3 targeting to the plasma membrane.

It is found in the cell membrane. It localises to the basolateral cell membrane. The enzyme catalyses (S)-lactate(in) + H(+)(in) = (S)-lactate(out) + H(+)(out). It carries out the reaction pyruvate(out) + H(+)(out) = pyruvate(in) + H(+)(in). Functionally, proton-dependent transporter of monocarboxylates such as L-lactate and pyruvate. Plays a predominant role in the L-lactate efflux from highly glycolytic cells. The sequence is that of Monocarboxylate transporter 4 (Slc16a3) from Mus musculus (Mouse).